Consider the following 147-residue polypeptide: Large ribosomal subunit protein uL11 (147 aa).

It belongs to the universal ribosomal protein uL11 family. Part of the ribosomal stalk of the 50S ribosomal subunit. Interacts with L10 and the large rRNA to form the base of the stalk. L10 forms an elongated spine to which L12 dimers bind in a sequential fashion forming a multimeric L10(L12)X complex. Post-translationally, one or more lysine residues are methylated.

Functionally, forms part of the ribosomal stalk which helps the ribosome interact with GTP-bound translation factors. The sequence is that of Large ribosomal subunit protein uL11 from Corynebacterium aurimucosum (strain ATCC 700975 / DSM 44827 / CIP 107346 / CN-1) (Corynebacterium nigricans).